The sequence spans 319 residues: G-protein coupled receptor 55 (319 aa).

Over 1–21 the chain is Extracellular; the sequence is MSQQNTSGDCLFDGVNELMKT. An N-linked (GlcNAc...) asparagine glycan is attached at Asn5. The chain crosses the membrane as a helical span at residues 22-42; that stretch reads LQFAVHIPTFVLGLLLNLLAI. The Cytoplasmic portion of the chain corresponds to 43 to 58; sequence HGFSTFLKNRWPDYAA. The chain crosses the membrane as a helical span at residues 59-79; that stretch reads TSIYMINLAVFDLLLVLSLPF. Residues 80–94 are Extracellular-facing; that stretch reads KMVLSQVQSPFPSLC. The helical transmembrane segment at 95-115 threads the bilayer; sequence TLVECLYFVSMYGSVFTICFI. The Cytoplasmic portion of the chain corresponds to 116 to 137; sequence SMDRFLAIRYPLLVSHLRSPRK. The helical transmembrane segment at 138 to 158 threads the bilayer; that stretch reads IFGICCTIWVLVWTGSIPIYS. At 159-180 the chain is on the extracellular side; sequence FHGKVEKYMCFHNMSDDTWSAK. N-linked (GlcNAc...) asparagine glycosylation is present at Asn171. Residues 181–201 form a helical membrane-spanning segment; it reads VFFPLEVFGFLLPMGIMGFCC. At 202–231 the chain is on the cytoplasmic side; it reads SRSIHILLGRRDHTQDWVQQKACIYSIAAS. A helical membrane pass occupies residues 232 to 252; that stretch reads LAVFVVSFLPVHLGFFLQFLV. The Extracellular portion of the chain corresponds to 253 to 271; sequence RNSFIVECRAKQSISFFLQ. The helical transmembrane segment at 272-292 threads the bilayer; it reads LSMCFSNVNCCLDVFCYYFVI. Over 293-319 the chain is Cytoplasmic; it reads KEFRMNIRAHRPSRVQLVLQDTTISRG.

This sequence belongs to the G-protein coupled receptor 1 family. In terms of tissue distribution, expressed in the caudate nucleus and putamen, but not detected in the hippocampus, thalamus, pons cerebellum, frontal cortex of the brain or in the liver. Expressed in osteoclasts and osteoblasts. Higly expressed in macrophages and B-cells.

Its subcellular location is the cell membrane. Functionally, G-protein coupled receptor that binds to several ligands including 2-arachidonoyl lysophosphatidylinositol or lysophosphatidylglucoside with high affinity, leading to rapid and transient activation of numerous intracellular signaling pathways. Induces the Ca(2+) release from intracellular stores via ERK, the heterotrimeric G protein GNA13 and RHOA leading to morphological changes including cell rounding and stress fiber formation. In macrophages, acts downstream of lysophosphatidylglucoside to inhibit the translocation of the phospholipid-transporting ABCA1 to plasma membrane and subsequent cholesterol efflux leading to lipid accumulation and foam cell formation. The polypeptide is G-protein coupled receptor 55 (GPR55) (Homo sapiens (Human)).